The primary structure comprises 169 residues: Disulfide bond formation protein B (169 aa).

The Cytoplasmic portion of the chain corresponds to 1–8 (MRLSVRWV). The helical transmembrane segment at 9 to 25 (FFLGFFLCALMLAIAGY) threads the bilayer. At 26–43 (FQFVENLEPCPLCILSRV) the chain is on the periplasmic side. Cysteine 35 and cysteine 38 are oxidised to a cystine. Residues 44–60 (AVLAIGGVFLVAALHNP) form a helical membrane-spanning segment. At 61 to 67 (KSWGIKV) the chain is on the cytoplasmic side. A helical transmembrane segment spans residues 68–84 (YALLGFVVTLIGIGITG). Topologically, residues 85 to 141 (RHVWLQSLPADQVPACGPGLNFMLDNFPLTETLELVFRGSGECAEVQWSFLGLTIPG) are periplasmic. An intrachain disulfide couples cysteine 100 to cysteine 127. Residues 142–160 (WTLVAFLFLGVISLWQMGR) form a helical membrane-spanning segment. Over 161 to 169 (TGGGAGKLT) the chain is Cytoplasmic.

It belongs to the DsbB family.

Its subcellular location is the cell inner membrane. Its function is as follows. Required for disulfide bond formation in some periplasmic proteins. Acts by oxidizing the DsbA protein. This is Disulfide bond formation protein B from Nitrosococcus oceani (strain ATCC 19707 / BCRC 17464 / JCM 30415 / NCIMB 11848 / C-107).